We begin with the raw amino-acid sequence, 320 residues long: ATP-dependent 6-phosphofructokinase (320 aa).

Residue glycine 12 participates in ATP binding. 22–26 lines the ADP pocket; it reads RGVVR. ATP is bound by residues 73-74 and 103-106; these read RF and GDGS. Aspartate 104 is a binding site for Mg(2+). Substrate is bound at residue 126–128; that stretch reads TID. Aspartate 128 acts as the Proton acceptor in catalysis. An ADP-binding site is contributed by arginine 155. Substrate-binding positions include arginine 163 and 170–172; that span reads MGR. ADP-binding positions include 186-188, lysine 212, and 214-216; these read GCE and KKH. Substrate is bound by residues glutamate 223, arginine 244, and 250–253; that span reads HIQR.

The protein belongs to the phosphofructokinase type A (PFKA) family. ATP-dependent PFK group I subfamily. Prokaryotic clade 'B1' sub-subfamily. Homotetramer. The cofactor is Mg(2+).

The protein localises to the cytoplasm. The enzyme catalyses beta-D-fructose 6-phosphate + ATP = beta-D-fructose 1,6-bisphosphate + ADP + H(+). The protein operates within carbohydrate degradation; glycolysis; D-glyceraldehyde 3-phosphate and glycerone phosphate from D-glucose: step 3/4. Its activity is regulated as follows. Allosterically activated by ADP and other diphosphonucleosides, and allosterically inhibited by phosphoenolpyruvate. Functionally, catalyzes the phosphorylation of D-fructose 6-phosphate to fructose 1,6-bisphosphate by ATP, the first committing step of glycolysis. This chain is ATP-dependent 6-phosphofructokinase, found in Vibrio cholerae serotype O1 (strain ATCC 39315 / El Tor Inaba N16961).